A 98-amino-acid chain; its full sequence is uncharacterized protein (98 aa).

Residues 53-98 (AALEGGRHRHRGESASGNGIQHGVPPNVALIPSGSTLLTPARSGHV) are disordered.

This is an uncharacterized protein from Mycolicibacterium smegmatis (strain ATCC 700084 / mc(2)155) (Mycobacterium smegmatis).